The sequence spans 184 residues: ATP synthase subunit delta (184 aa).

Belongs to the ATPase delta chain family. As to quaternary structure, F-type ATPases have 2 components, F(1) - the catalytic core - and F(0) - the membrane proton channel. F(1) has five subunits: alpha(3), beta(3), gamma(1), delta(1), epsilon(1). CF(0) has four main subunits: a(1), b(1), b'(1) and c(10-14). The alpha and beta chains form an alternating ring which encloses part of the gamma chain. F(1) is attached to F(0) by a central stalk formed by the gamma and epsilon chains, while a peripheral stalk is formed by the delta, b and b' chains.

The protein resides in the cellular thylakoid membrane. F(1)F(0) ATP synthase produces ATP from ADP in the presence of a proton or sodium gradient. F-type ATPases consist of two structural domains, F(1) containing the extramembraneous catalytic core and F(0) containing the membrane proton channel, linked together by a central stalk and a peripheral stalk. During catalysis, ATP synthesis in the catalytic domain of F(1) is coupled via a rotary mechanism of the central stalk subunits to proton translocation. Its function is as follows. This protein is part of the stalk that links CF(0) to CF(1). It either transmits conformational changes from CF(0) to CF(1) or is implicated in proton conduction. The sequence is that of ATP synthase subunit delta from Synechococcus sp. (strain PCC 6716).